We begin with the raw amino-acid sequence, 270 residues long: Proteasome subunit alpha type-1 (270 aa).

The tract at residues 239–270 is disordered; it reads SMEAAEEAPAAEAESSSMQEEDKGTDAAPMDI. Residues 245–256 show a composition bias toward low complexity; sequence EAPAAEAESSSM.

It belongs to the peptidase T1A family. As to quaternary structure, the 26S proteasome consists of a 20S proteasome core and two 19S regulatory subunits. The 20S proteasome core is composed of 28 subunits that are arranged in four stacked rings, resulting in a barrel-shaped structure. The two end rings are each formed by seven alpha subunits, and the two central rings are each formed by seven beta subunits. The catalytic chamber with the active sites is on the inside of the barrel.

The protein resides in the cytoplasm. The protein localises to the nucleus. Its function is as follows. The proteasome is a multicatalytic proteinase complex which is characterized by its ability to cleave peptides with Arg, Phe, Tyr, Leu, and Glu adjacent to the leaving group at neutral or slightly basic pH. The proteasome has an ATP-dependent proteolytic activity. The sequence is that of Proteasome subunit alpha type-1 (PAF1) from Oryza sativa subsp. japonica (Rice).